Reading from the N-terminus, the 496-residue chain is Gasdermin-E (496 aa).

Positions 1–56 (MFAKATRNFLREVDADGDLIAVSNLNDSDKLQLLSLVTKKKRFWCWQRPKYQFLSL) are membrane targeting domain. C45 is modified (S-(2-succinyl)cysteine). A Glycyl lysine isopeptide (Lys-Gly) (interchain with G-Cter in ubiquitin) cross-link involves residue K120. Residues C156, C168, and C180 each carry the S-(2-succinyl)cysteine modification. Residue K189 forms a Glycyl lysine isopeptide (Lys-Gly) (interchain with G-Cter in ubiquitin) linkage. 5 positions are modified to S-(2-succinyl)cysteine: C235, C371, C408, C417, and C489.

Belongs to the gasdermin family. As to quaternary structure, homooligomer; homooligomeric ring-shaped pore complex containing 27-28 subunits when inserted in the membrane. Cleavage at Asp-270 by CASP3 (mature and uncleaved precursor forms) or granzyme B (GZMB) relieves autoinhibition and is sufficient to initiate pyroptosis. Post-translationally, succination by the Krebs cycle intermediate fumarate, which leads to S-(2-succinyl)cysteine residues, inhibits processing by caspases, and ability to initiate pyroptosis. Succination modification is catalyzed by a non-enzymatic reaction caused by an accumulation of fumarate. In terms of processing, ubiquitinated at Lys-120 and Lys-189 via 'Lys-48'-linked polyubiquitin chains, leading to proteasomal degradation. Deubiquitinated by USP48, leading to increased stability. Palmitoylated. Expressed in cochlea. Low level of expression in heart, brain, placenta, lung, liver, skeletal muscle, kidney and pancreas, with highest expression in placenta.

It is found in the cell membrane. It localises to the cytoplasm. Its subcellular location is the cytosol. With respect to regulation, the full-length protein before cleavage is inactive: intramolecular interactions between N- and C-terminal domains mediate autoinhibition in the absence of activation signal. The intrinsic pyroptosis-inducing activity is carried by the released N-terminal moiety (Gasdermin-E, N-terminal) following cleavage by CASP3 or granzyme B (GZMB). Activated by NLRP1 in the absence of GSDMD expression: NLRP1 cleaves and activates CASP8, promoting downstream activation of CASP3 and subsequent activation of GSDME. (Microbial infection) Activated upon human coronavirus SARS-CoV-2 infection, leading to lung epithelial cell death. Activation takes place in response to (1) activation of NLRP1 and (2) inactivation of GSDMD following NLRP1 and GSDMD cleavage by the SARS-CoV-2 3C-like proteinase nsp5. Its function is as follows. Precursor of a pore-forming protein that converts non-inflammatory apoptosis to pyroptosis. This form constitutes the precursor of the pore-forming protein: upon cleavage, the released N-terminal moiety (Gasdermin-E, N-terminal) binds to membranes and forms pores, triggering pyroptosis. Functionally, pore-forming protein produced by cleavage by CASP3 or granzyme B (GZMB), which converts non-inflammatory apoptosis to pyroptosis or promotes granzyme-mediated pyroptosis, respectively. After cleavage, moves to the plasma membrane, homooligomerizes within the membrane and forms pores of 10-15 nanometers (nm) of inner diameter, allowing the release of mature interleukins (IL1B and IL16) and triggering pyroptosis. Binds to inner leaflet lipids, bisphosphorylated phosphatidylinositols, such as phosphatidylinositol (4,5)-bisphosphate. Cleavage by CASP3 switches CASP3-mediated apoptosis induced by TNF or danger signals, such as chemotherapy drugs, to pyroptosis. Mediates secondary necrosis downstream of the mitochondrial apoptotic pathway and CASP3 activation as well as in response to viral agents. Exhibits bactericidal activity. Cleavage by GZMB promotes tumor suppressor activity by triggering robust anti-tumor immunity. Suppresses tumors by mediating granzyme-mediated pyroptosis in target cells of natural killer (NK) cells: cleavage by granzyme B (GZMB), delivered to target cells from NK-cells, triggers pyroptosis of tumor cells and tumor suppression. May play a role in the p53/TP53-regulated cellular response to DNA damage. In terms of biological role, (Microbial infection) Pore-forming protein, which promotes maternal placental pyroptosis in response to Zika virus infection, contributing to adverse fetal outcomes. The protein is Gasdermin-E of Homo sapiens (Human).